Consider the following 195-residue polypeptide: ATP-dependent Clp protease proteolytic subunit (195 aa).

S101 (nucleophile) is an active-site residue. Residue H126 is part of the active site.

Belongs to the peptidase S14 family.

The protein resides in the plastid. It is found in the chloroplast stroma. It carries out the reaction Hydrolysis of proteins to small peptides in the presence of ATP and magnesium. alpha-casein is the usual test substrate. In the absence of ATP, only oligopeptides shorter than five residues are hydrolyzed (such as succinyl-Leu-Tyr-|-NHMec, and Leu-Tyr-Leu-|-Tyr-Trp, in which cleavage of the -Tyr-|-Leu- and -Tyr-|-Trp bonds also occurs).. Functionally, cleaves peptides in various proteins in a process that requires ATP hydrolysis. Has a chymotrypsin-like activity. Plays a major role in the degradation of misfolded proteins. The sequence is that of ATP-dependent Clp protease proteolytic subunit from Bigelowiella natans (Pedinomonas minutissima).